The following is a 568-amino-acid chain: Protein yellow (568 aa).

The signal sequence occupies residues 1-28; the sequence is MHAQDKGGVLPGLSLLLIAVAMVCPSQA. N-linked (GlcNAc...) asparagine glycans are attached at residues N151 and N222.

Belongs to the major royal jelly protein family.

Its subcellular location is the secreted. In terms of biological role, controls the pigmentation pattern of the adult cuticle and larval mouth parts. In Drosophila guanche (Fruit fly), this protein is Protein yellow (y).